Reading from the N-terminus, the 374-residue chain is Alanine racemase (374 aa).

The Proton acceptor; specific for D-alanine role is filled by Lys35. Lys35 is modified (N6-(pyridoxal phosphate)lysine). Substrate is bound at residue Arg133. The active-site Proton acceptor; specific for L-alanine is the Tyr261. Position 315 (Met315) interacts with substrate.

Belongs to the alanine racemase family. Requires pyridoxal 5'-phosphate as cofactor.

It catalyses the reaction L-alanine = D-alanine. Its pathway is amino-acid biosynthesis; D-alanine biosynthesis; D-alanine from L-alanine: step 1/1. In terms of biological role, catalyzes the interconversion of L-alanine and D-alanine. May also act on other amino acids. This is Alanine racemase (alr) from Psychrobacter sp. (strain PRwf-1).